The sequence spans 549 residues: Chaperonin GroEL (549 aa).

Residues 30–33 (TLGP), K51, 87–91 (DGTTT), G415, and D497 contribute to the ATP site.

This sequence belongs to the chaperonin (HSP60) family. As to quaternary structure, forms a cylinder of 14 subunits composed of two heptameric rings stacked back-to-back. Interacts with the co-chaperonin GroES.

The protein localises to the cytoplasm. It catalyses the reaction ATP + H2O + a folded polypeptide = ADP + phosphate + an unfolded polypeptide.. Its function is as follows. Together with its co-chaperonin GroES, plays an essential role in assisting protein folding. The GroEL-GroES system forms a nano-cage that allows encapsulation of the non-native substrate proteins and provides a physical environment optimized to promote and accelerate protein folding. The sequence is that of Chaperonin GroEL from Pectobacterium atrosepticum (strain SCRI 1043 / ATCC BAA-672) (Erwinia carotovora subsp. atroseptica).